Here is a 119-residue protein sequence, read N- to C-terminus: UPF0102 protein PM0647 (119 aa).

It belongs to the UPF0102 family.

This Pasteurella multocida (strain Pm70) protein is UPF0102 protein PM0647.